We begin with the raw amino-acid sequence, 99 residues long: Large ribosomal subunit protein uL23 (99 aa).

It belongs to the universal ribosomal protein uL23 family. In terms of assembly, part of the 50S ribosomal subunit. Contacts protein L29, and trigger factor when it is bound to the ribosome.

Functionally, one of the early assembly proteins it binds 23S rRNA. One of the proteins that surrounds the polypeptide exit tunnel on the outside of the ribosome. Forms the main docking site for trigger factor binding to the ribosome. This chain is Large ribosomal subunit protein uL23, found in Francisella philomiragia subsp. philomiragia (strain ATCC 25017 / CCUG 19701 / FSC 153 / O#319-036).